Consider the following 95-residue polypeptide: Co-chaperonin GroES (95 aa).

This sequence belongs to the GroES chaperonin family. As to quaternary structure, heptamer of 7 subunits arranged in a ring. Interacts with the chaperonin GroEL.

Its subcellular location is the cytoplasm. Functionally, together with the chaperonin GroEL, plays an essential role in assisting protein folding. The GroEL-GroES system forms a nano-cage that allows encapsulation of the non-native substrate proteins and provides a physical environment optimized to promote and accelerate protein folding. GroES binds to the apical surface of the GroEL ring, thereby capping the opening of the GroEL channel. In Clostridium acetobutylicum (strain ATCC 824 / DSM 792 / JCM 1419 / IAM 19013 / LMG 5710 / NBRC 13948 / NRRL B-527 / VKM B-1787 / 2291 / W), this protein is Co-chaperonin GroES.